Reading from the N-terminus, the 702-residue chain is Polyribonucleotide nucleotidyltransferase (702 aa).

2 residues coordinate Mg(2+): Asp-484 and Asp-490. The region spanning 551-610 (PHIESFKIAVEKIGALIGPGGKTVKSLSDQYRVTINTDSDGTVTVSGRDAQSVFDAKVAV) is the KH domain. In terms of domain architecture, S1 motif spans 620 to 688 (GRVYQGVVKR…RMGRLNLSYI (69 aa)).

It belongs to the polyribonucleotide nucleotidyltransferase family. It depends on Mg(2+) as a cofactor.

It is found in the cytoplasm. The catalysed reaction is RNA(n+1) + phosphate = RNA(n) + a ribonucleoside 5'-diphosphate. Its function is as follows. Involved in mRNA degradation. Catalyzes the phosphorolysis of single-stranded polyribonucleotides processively in the 3'- to 5'-direction. In Treponema pallidum (strain Nichols), this protein is Polyribonucleotide nucleotidyltransferase.